We begin with the raw amino-acid sequence, 423 residues long: Cytochrome c biogenesis protein Ccs1 (423 aa).

The next 3 helical transmembrane spans lie at Leu-11 to Ile-31, Asn-70 to Phe-90, and Ile-153 to Ser-173.

This sequence belongs to the Ccs1/CcsB family. May interact with CcsA.

It localises to the plastid. It is found in the chloroplast thylakoid membrane. In terms of biological role, required during biogenesis of c-type cytochromes (cytochrome c6 and cytochrome f) at the step of heme attachment. The protein is Cytochrome c biogenesis protein Ccs1 of Heterosigma akashiwo (strain NIES-293 / 8280G21-1).